Here is a 397-residue protein sequence, read N- to C-terminus: Enoyl-[acyl-carrier-protein] reductase [NADH] (397 aa).

NAD(+)-binding positions include 48–53 (GASTGY), 74–75 (FE), 111–112 (DA), and 139–140 (AA). Y225 is a substrate binding site. The active-site Proton donor is Y235. NAD(+) is bound by residues K244 and 273 to 275 (VVT).

The protein belongs to the TER reductase family. As to quaternary structure, monomer.

It catalyses the reaction a 2,3-saturated acyl-[ACP] + NAD(+) = a (2E)-enoyl-[ACP] + NADH + H(+). It functions in the pathway lipid metabolism; fatty acid biosynthesis. In terms of biological role, involved in the final reduction of the elongation cycle of fatty acid synthesis (FAS II). Catalyzes the reduction of a carbon-carbon double bond in an enoyl moiety that is covalently linked to an acyl carrier protein (ACP). The chain is Enoyl-[acyl-carrier-protein] reductase [NADH] from Burkholderia pseudomallei (strain 1710b).